Reading from the N-terminus, the 240-residue chain is Probable transcriptional regulatory protein MXAN_7062 (240 aa).

It belongs to the TACO1 family.

The protein localises to the cytoplasm. The polypeptide is Probable transcriptional regulatory protein MXAN_7062 (Myxococcus xanthus (strain DK1622)).